We begin with the raw amino-acid sequence, 145 residues long: Maximins 5/H4 type 1 (145 aa).

Positions 1 to 18 (MNFKYIVAVSFLIASAYA) are cleaved as a signal peptide. Propeptides lie at residues 19–43 (RSVQ…REIR) and 74–124 (TAEE…KEKR). Leucine 144 carries the leucine amide modification.

This sequence belongs to the bombinin family. In terms of tissue distribution, expressed by the skin glands.

It localises to the secreted. In terms of biological role, maximin-5 shows antibacterial activity against both Gram-positive and Gram-negative bacteria. The only exception is the resistance of E.coli. Also shows antimicrobial activity against fungi C.albicans, A.flavus and P.uticale. It has little hemolytic activity. It does not possess a significant cytotoxicity against tumor cell lines. It does not possess a significant anti-HIV activity. Functionally, maximin-H4 shows antibacterial activity against both Gram-positive and Gram-negative bacteria. It also shows antimicrobial activity against the fungus C.albicans. Shows strong hemolytic activity. The chain is Maximins 5/H4 type 1 from Bombina maxima (Giant fire-bellied toad).